The primary structure comprises 268 residues: Ubiquinone biosynthesis protein COQ4 homolog, mitochondrial (268 aa).

Zn(2+) is bound by residues His171, Asp172, His175, and Glu187.

This sequence belongs to the COQ4 family. As to quaternary structure, component of a multi-subunit COQ enzyme complex. Zn(2+) is required as a cofactor.

Its subcellular location is the mitochondrion inner membrane. The enzyme catalyses a 4-hydroxy-3-methoxy-5-(all-trans-polyprenyl)benzoate + H(+) = a 2-methoxy-6-(all-trans-polyprenyl)phenol + CO2. Its pathway is cofactor biosynthesis; ubiquinone biosynthesis. In terms of biological role, lyase that catalyzes the C1-decarboxylation of 4-hydroxy-3-methoxy-5-(all-trans-polyprenyl)benzoic acid into 2-methoxy-6-(all-trans-polyprenyl)phenol during ubiquinone biosynthesis. This Drosophila erecta (Fruit fly) protein is Ubiquinone biosynthesis protein COQ4 homolog, mitochondrial.